The sequence spans 339 residues: MVDPIVTKNWRDLIKPRGLVVDQESLSNTYGKFVAEPLERGFGITLGNSLRRVLLSSLQGAAITSVKIEGVEHEFMTIPEVAEDVTDIILNLKEVLLQIHTNEVKTLRIEADGPREIKAGDIIADGQVEILNPGHHILTISEGGRVRMEMTARRGRGYVPADKNKVPGQPIGTIPIDALFSPIRKVNYQVTNARVGQQTDYDKLSLEVWTDGSVAPNDAVAYAAKIVKEQLSIFINFDEAEEPAEEVKPVEEQKLNENLFRSVDELELSVRSANCLQNANIKTIGDLVQKTEAEMLKTKNFGRKSLKEIKEILAEMGLSLGMKLENWPPKAAPQGAPKV.

Residues 1–238 (MVDPIVTKNW…EQLSIFINFD (238 aa)) are alpha N-terminal domain (alpha-NTD). Positions 255–339 (LNENLFRSVD…KAAPQGAPKV (85 aa)) are alpha C-terminal domain (alpha-CTD).

Belongs to the RNA polymerase alpha chain family. As to quaternary structure, homodimer. The RNAP catalytic core consists of 2 alpha, 1 beta, 1 beta' and 1 omega subunit. When a sigma factor is associated with the core the holoenzyme is formed, which can initiate transcription.

It catalyses the reaction RNA(n) + a ribonucleoside 5'-triphosphate = RNA(n+1) + diphosphate. DNA-dependent RNA polymerase catalyzes the transcription of DNA into RNA using the four ribonucleoside triphosphates as substrates. This chain is DNA-directed RNA polymerase subunit alpha, found in Anaeromyxobacter sp. (strain Fw109-5).